Here is a 429-residue protein sequence, read N- to C-terminus: UDP-N-acetylglucosamine 1-carboxyvinyltransferase (429 aa).

22–23 (KN) contributes to the phosphoenolpyruvate binding site. Residue Arg-102 coordinates UDP-N-acetyl-alpha-D-glucosamine. Cys-126 serves as the catalytic Proton donor. Cys-126 is modified (2-(S-cysteinyl)pyruvic acid O-phosphothioketal). UDP-N-acetyl-alpha-D-glucosamine contacts are provided by residues 131–135 (RPVDL), Asp-316, and Ile-338.

It belongs to the EPSP synthase family. MurA subfamily.

It localises to the cytoplasm. It catalyses the reaction phosphoenolpyruvate + UDP-N-acetyl-alpha-D-glucosamine = UDP-N-acetyl-3-O-(1-carboxyvinyl)-alpha-D-glucosamine + phosphate. It functions in the pathway cell wall biogenesis; peptidoglycan biosynthesis. Functionally, cell wall formation. Adds enolpyruvyl to UDP-N-acetylglucosamine. This is UDP-N-acetylglucosamine 1-carboxyvinyltransferase from Rhodopseudomonas palustris (strain TIE-1).